We begin with the raw amino-acid sequence, 429 residues long: S-adenosylmethionine synthase (429 aa).

Glutamate 9 contacts Mg(2+). Residue histidine 15 coordinates ATP. Residue glutamate 43 participates in K(+) binding. L-methionine is bound by residues glutamate 56 and glutamine 99. Residues 167–169 (DGK), 235–238 (SGRF), aspartate 246, 252–253 (RK), alanine 269, lysine 273, and lysine 277 contribute to the ATP site. Aspartate 246 serves as a coordination point for L-methionine. Lysine 277 lines the L-methionine pocket.

Belongs to the AdoMet synthase family. In terms of assembly, homotetramer. It depends on Mn(2+) as a cofactor. Mg(2+) is required as a cofactor. Co(2+) serves as cofactor. Requires K(+) as cofactor.

The protein resides in the cytoplasm. The enzyme catalyses L-methionine + ATP + H2O = S-adenosyl-L-methionine + phosphate + diphosphate. It participates in amino-acid biosynthesis; S-adenosyl-L-methionine biosynthesis; S-adenosyl-L-methionine from L-methionine: step 1/1. In terms of biological role, catalyzes the formation of S-adenosylmethionine from methionine and ATP. The reaction comprises two steps that are both catalyzed by the same enzyme: formation of S-adenosylmethionine (AdoMet) and triphosphate, and subsequent hydrolysis of the triphosphate. In Carica papaya (Papaya), this protein is S-adenosylmethionine synthase (SAMS).